The following is a 247-amino-acid chain: Tetraspanin-18 (247 aa).

Topologically, residues 1-15 (MEGDCLSCMKYLMFL) are cytoplasmic. Residues 16-36 (FNFFIFLGGACLLGVGIWVIV) traverse the membrane as a helical segment. Residues 37–49 (DPTGFREIVAANP) lie on the Extracellular side of the membrane. Residues 50–70 (LLFTGAYIMLAMGAMLFLLGF) form a helical membrane-spanning segment. Residues 71 to 82 (LGCCGAIRENKC) are Cytoplasmic-facing. A helical transmembrane segment spans residues 83 to 103 (LLLFFFMFILLIFLAELSAAI). Over 104–222 (LAFIFRENLT…SFETYVYLAG (119 aa)) the chain is Extracellular. Residues Asn111 and Asn129 are each glycosylated (N-linked (GlcNAc...) asparagine). Residues 223–243 (ALAIGVLAIELFAMIFAMCLF) traverse the membrane as a helical segment. Residues 244–247 (RGIQ) are Cytoplasmic-facing.

It belongs to the tetraspanin (TM4SF) family.

Its subcellular location is the membrane. Its function is as follows. Maintains CDH6 protein and promotes CDH6-dependent adherens junctions, inhibiting neural crest migration. The protein is Tetraspanin-18 of Gallus gallus (Chicken).